The sequence spans 348 residues: Centromere protein N (348 aa).

This sequence belongs to the CENP-N/CHL4 family.

The protein resides in the nucleus. It localises to the chromosome. The protein localises to the centromere. Probable component of a centromeric complex involved in assembly of kinetochore proteins, mitotic progression and chromosome segregation. The polypeptide is Centromere protein N (cenpn) (Xenopus tropicalis (Western clawed frog)).